Consider the following 352-residue polypeptide: Protein Wnt-3a (352 aa).

The first 18 residues, 1–18 (MAPLGYLLVLCSLKQALG), serve as a signal peptide directing secretion. 11 disulfide bridges follow: Cys77–Cys88, Cys128–Cys136, Cys138–Cys155, Cys203–Cys217, Cys205–Cys212, Cys281–Cys312, Cys297–Cys307, Cys311–Cys351, Cys327–Cys342, Cys329–Cys339, and Cys334–Cys335. Asn87 is a glycosylation site (N-linked (GlcNAc...) asparagine). Residue Ser209 is the site of O-palmitoleoyl serine; by PORCN attachment. An N-linked (GlcNAc...) asparagine glycan is attached at Asn298.

Belongs to the Wnt family. As to quaternary structure, forms a soluble 1:1 complex with AFM; this prevents oligomerization and is required for prolonged biological activity. The complex with AFM may represent the physiological form in body fluids. Homooligomer; disulfide-linked, leading to inactivation. Interacts with APCDD1 and WLS. Component of the Wnt-Fzd-LRP5-LRP6 signaling complex that contains a WNT protein, a FZD protein and LRP5 or LRP6. Interacts directly in the complex with LRP6. Interacts with PORCN. Interacts with glypican GPC3. Interacts with PKD1 (via extracellular domain). Interacts with FZD5. Proteolytic processing by TIKI1 and TIKI2 promotes oxidation and formation of large disulfide-bond oligomers, leading to inactivation of WNT3A. In terms of processing, disulfide bonds have critical and distinct roles in secretion and activity. Loss of each conserved cysteine in WNT3A results in high molecular weight oxidized Wnt oligomers, which are formed through inter-Wnt disulfide bonding. Post-translationally, palmitoleoylation by PORCN is required for efficient binding to frizzled receptors. Palmitoleoylation is required for proper trafficking to cell surface, vacuolar acidification is critical to release palmitoleoylated WNT3A from WLS in secretory vesicles. Depalmitoleoylated by NOTUM, leading to inhibit Wnt signaling pathway, possibly by promoting disulfide bond formation and oligomerization. As to expression, dorsal portion of the neural tube (developing roof plate), and mesenchyme tissue surrounding the umbilical veins.

The protein localises to the secreted. It is found in the extracellular space. Its subcellular location is the extracellular matrix. Its function is as follows. Ligand for members of the frizzled family of seven transmembrane receptors. Functions in the canonical Wnt signaling pathway that results in activation of transcription factors of the TCF/LEF family. Required for normal embryonic mesoderm development and formation of caudal somites. Required for normal morphogenesis of the developing neural tube. Mediates self-renewal of the stem cells at the bottom on intestinal crypts (in vitro). This Mus musculus (Mouse) protein is Protein Wnt-3a (Wnt3a).